The primary structure comprises 243 residues: RNA-binding protein with serine-rich domain 1 homolog (243 aa).

The tract at residues 48 to 92 (SSTRQFNNTRSPSGRSASRSSNFSHRSSSRDSFSSNRSYSSSLSR) is disordered. Positions 57–92 (RSPSGRSASRSSNFSHRSSSRDSFSSNRSYSSSLSR) are enriched in low complexity. Residues 99 to 177 (RTILVENLTR…EELFVSIKRF (79 aa)) form the RRM domain. Residues 189-243 (YENSYRPSRSQNNSHYNDKSFHRSRYSRARSRSPGSNISEYSDQSPPYHSYRHRP) are disordered. Over residues 193–203 (YRPSRSQNNSH) the composition is skewed to polar residues. The segment covering 210 to 219 (HRSRYSRARS) has biased composition (basic residues). Over residues 222–235 (PGSNISEYSDQSPP) the composition is skewed to polar residues.

The protein belongs to the splicing factor SR family. Component of the active spliceosome.

Its subcellular location is the cytoplasm. The protein resides in the nucleus. Functionally, putative component of the spliceosome which enhances the formation of the ATP-dependent A complex of the spliceosome. may participate in mRNA 3'-end cleavage. Also mediates increase of mRNA abundance and translational efficiency. This is RNA-binding protein with serine-rich domain 1 homolog from Schizosaccharomyces pombe (strain 972 / ATCC 24843) (Fission yeast).